A 422-amino-acid polypeptide reads, in one-letter code: Serine hydroxymethyltransferase (422 aa).

120–122 (GHI) lines the (6S)-5,6,7,8-tetrahydrofolate pocket. Lys226 bears the N6-(pyridoxal phosphate)lysine mark. Residue Glu241 participates in (6S)-5,6,7,8-tetrahydrofolate binding.

The protein belongs to the SHMT family. Homodimer. The cofactor is pyridoxal 5'-phosphate.

Its subcellular location is the cytoplasm. It catalyses the reaction 5,10-methylenetetrahydromethanopterin + glycine + H2O = 5,6,7,8-tetrahydromethanopterin + L-serine. It participates in amino-acid biosynthesis; glycine biosynthesis; glycine from L-serine: step 1/1. Functionally, catalyzes the reversible interconversion of serine and glycine with tetrahydromethanopterin (H4MPT) serving as the one-carbon carrier. Also exhibits a pteridine-independent aldolase activity toward beta-hydroxyamino acids, producing glycine and aldehydes, via a retro-aldol mechanism. The chain is Serine hydroxymethyltransferase from Methanosphaera stadtmanae (strain ATCC 43021 / DSM 3091 / JCM 11832 / MCB-3).